A 422-amino-acid chain; its full sequence is Phytoene synthase, chloroplastic (422 aa).

A chloroplast-targeting transit peptide spans 1 to 83 (MSLASSLVVS…GSVIVASMVA (83 aa)).

The protein belongs to the phytoene/squalene synthase family. As to quaternary structure, monomer.

Its subcellular location is the plastid. It is found in the chloroplast. The catalysed reaction is 2 (2E,6E,10E)-geranylgeranyl diphosphate = 15-cis-phytoene + 2 diphosphate. It functions in the pathway carotenoid biosynthesis; phytoene biosynthesis; all-trans-phytoene from geranylgeranyl diphosphate: step 1/1. Catalyzes the reaction from prephytoene diphosphate to phytoene. In Cucumis melo (Muskmelon), this protein is Phytoene synthase, chloroplastic (PSY).